We begin with the raw amino-acid sequence, 589 residues long: Lipoprotein LpqB (589 aa).

The first 20 residues, 1-20, serve as a signal peptide directing secretion; sequence MMRGVLVIMRLLCLGMLFTG. Cys21 is lipidated: N-palmitoyl cysteine. Cys21 carries S-diacylglycerol cysteine lipidation.

It belongs to the LpqB lipoprotein family.

Its subcellular location is the cell membrane. The sequence is that of Lipoprotein LpqB from Mycobacterium leprae (strain TN).